Consider the following 147-residue polypeptide: Leghemoglobin-1 (147 aa).

The Globin domain maps to Ser2–Ser147. Nitrated tyrosine is present on residues Tyr25 and Tyr30. Ser45 contributes to the heme b binding site. Phosphoserine is present on Ser45. His62 is a binding site for O2. Heme b contacts are provided by Lys65, His94, and Lys97. Tyr135 bears the Nitrated tyrosine mark.

This sequence belongs to the plant globin family. As to quaternary structure, monomer. Post-translationally, nitrated in effective nodules and particularly in hypoxic conditions; this mechanism may play a protective role in the symbiosis by buffering toxic peroxynitrite NO(2)(-). Nitration level decrease during nodule senescence. In terms of processing, phosphorylation at Ser-45 disrupts the molecular environment of its porphyrin ring oxygen binding pocket, thus leading to a reduced oxygen consumption and to the delivery of oxygen O(2) to symbiosomes. As to expression, root nodules.

It localises to the cytoplasm. The protein resides in the cytosol. It is found in the nucleus. Its function is as follows. Leghemoglobin that reversibly binds oxygen O(2) through a pentacoordinated heme iron. In root nodules, facilitates the diffusion of oxygen to the bacteroids while preventing the bacterial nitrogenase from being inactivated by buffering dioxygen, nitric oxide and carbon monoxide, and promoting the formation of reactive oxygen species (ROS, e.g. H(2)O(2)). This role is essential for symbiotic nitrogen fixation (SNF). The chain is Leghemoglobin-1 from Medicago sativa (Alfalfa).